The primary structure comprises 198 residues: Large ribosomal subunit protein bL21 (198 aa).

The protein belongs to the bacterial ribosomal protein bL21 family. As to quaternary structure, part of the 50S ribosomal subunit. Contacts protein L20.

Its function is as follows. This protein binds to 23S rRNA in the presence of protein L20. This Ruegeria sp. (strain TM1040) (Silicibacter sp.) protein is Large ribosomal subunit protein bL21.